The sequence spans 501 residues: Glycerol kinase (501 aa).

ADP is bound at residue Thr14. ATP-binding residues include Thr14, Thr15, and Ser16. Thr14 contacts sn-glycerol 3-phosphate. Arg18 provides a ligand contact to ADP. Arg84, Glu85, Tyr135, and Asp244 together coordinate sn-glycerol 3-phosphate. Arg84, Glu85, Tyr135, Asp244, and Gln245 together coordinate glycerol. Thr266 and Gly309 together coordinate ADP. The ATP site is built by Thr266, Gly309, Gln313, and Gly410. 2 residues coordinate ADP: Gly410 and Asn414.

It belongs to the FGGY kinase family.

The enzyme catalyses glycerol + ATP = sn-glycerol 3-phosphate + ADP + H(+). It participates in polyol metabolism; glycerol degradation via glycerol kinase pathway; sn-glycerol 3-phosphate from glycerol: step 1/1. Its activity is regulated as follows. Inhibited by fructose 1,6-bisphosphate (FBP). Functionally, key enzyme in the regulation of glycerol uptake and metabolism. Catalyzes the phosphorylation of glycerol to yield sn-glycerol 3-phosphate. This Deinococcus radiodurans (strain ATCC 13939 / DSM 20539 / JCM 16871 / CCUG 27074 / LMG 4051 / NBRC 15346 / NCIMB 9279 / VKM B-1422 / R1) protein is Glycerol kinase.